The following is a 101-amino-acid chain: NADH-quinone oxidoreductase subunit K (101 aa).

The next 3 membrane-spanning stretches (helical) occupy residues 4 to 24, 29 to 49, and 65 to 85; these read LSHYLTVAAILFTLGVLGIFI, IIVILMSVELILLAVNINLVA, and FVLTVAAAEAAIGLAILVVFF.

It belongs to the complex I subunit 4L family. NDH-1 is composed of 14 different subunits. Subunits NuoA, H, J, K, L, M, N constitute the membrane sector of the complex.

The protein localises to the cell inner membrane. The catalysed reaction is a quinone + NADH + 5 H(+)(in) = a quinol + NAD(+) + 4 H(+)(out). In terms of biological role, NDH-1 shuttles electrons from NADH, via FMN and iron-sulfur (Fe-S) centers, to quinones in the respiratory chain. The immediate electron acceptor for the enzyme in this species is believed to be ubiquinone. Couples the redox reaction to proton translocation (for every two electrons transferred, four hydrogen ions are translocated across the cytoplasmic membrane), and thus conserves the redox energy in a proton gradient. This Methylobacterium nodulans (strain LMG 21967 / CNCM I-2342 / ORS 2060) protein is NADH-quinone oxidoreductase subunit K.